The following is a 127-amino-acid chain: Longitudinals lacking protein-like (127 aa).

Residues 33 to 98 (TDVTLACEGQ…MYAGEVNVSQ (66 aa)) enclose the BTB domain.

In terms of assembly, the BTB domain interacts with the BTB domain of Trl in vitro. Found in a Pc-containing complex.

The protein localises to the nucleus. In terms of biological role, required, together with Trl, for maintaining the repressed state of target genes including homeotic genes Scr and Ubx. May also be involved in the activation of homeotic genes. Binds to a DNA Polycomb response element (PRE) at the bithorax complex. Also binds to polytene chromosomes at several hundred sites, many of which are shared with Trl and ph-p. Required during embryonic development. In Drosophila melanogaster (Fruit fly), this protein is Longitudinals lacking protein-like.